The sequence spans 304 residues: Uricase (304 aa).

Position 2 is an N-acetylalanine (A2). Residues K10 and K23 each carry the N6-acetyllysine; alternate modification. Residues K10 and K23 each carry the N6-succinyllysine; alternate modification. The Charge relay system role is filled by K23. Residues K27 and K36 each carry the N6-acetyllysine modification. A phosphoserine mark is found at S39 and S63. Residue T68 is the Charge relay system of the active site. Urate is bound by residues T68 and D69. Residues K118, K122, and K164 each carry the N6-acetyllysine modification. F170 is a binding site for urate. K175 and K185 each carry N6-acetyllysine. R187 provides a ligand contact to urate. N6-acetyllysine; alternate is present on residues K221 and K228. N6-succinyllysine; alternate occurs at positions 221 and 228. Phosphoserine is present on S232. Urate is bound by residues V235, Q236, and N262. H264 serves as the catalytic Charge relay system. K278 is modified (N6-acetyllysine). Y289 carries the post-translational modification Phosphotyrosine. A Microbody targeting signal motif is present at residues 302–304 (SRL).

This sequence belongs to the uricase family.

The protein resides in the peroxisome. It catalyses the reaction urate + O2 + H2O = 5-hydroxyisourate + H2O2. It participates in purine metabolism; urate degradation; (S)-allantoin from urate: step 1/3. Functionally, catalyzes the oxidation of uric acid to 5-hydroxyisourate, which is further processed to form (S)-allantoin. The sequence is that of Uricase (UOX) from Macaca mulatta (Rhesus macaque).